We begin with the raw amino-acid sequence, 224 residues long: 2-C-methyl-D-erythritol 4-phosphate cytidylyltransferase (224 aa).

It belongs to the IspD/TarI cytidylyltransferase family. IspD subfamily.

The catalysed reaction is 2-C-methyl-D-erythritol 4-phosphate + CTP + H(+) = 4-CDP-2-C-methyl-D-erythritol + diphosphate. It participates in isoprenoid biosynthesis; isopentenyl diphosphate biosynthesis via DXP pathway; isopentenyl diphosphate from 1-deoxy-D-xylulose 5-phosphate: step 2/6. Its function is as follows. Catalyzes the formation of 4-diphosphocytidyl-2-C-methyl-D-erythritol from CTP and 2-C-methyl-D-erythritol 4-phosphate (MEP). The polypeptide is 2-C-methyl-D-erythritol 4-phosphate cytidylyltransferase (Caldicellulosiruptor bescii (strain ATCC BAA-1888 / DSM 6725 / KCTC 15123 / Z-1320) (Anaerocellum thermophilum)).